The following is an 838-amino-acid chain: V-type proton ATPase 116 kDa subunit a 1 (838 aa).

Residues 1–388 are Cytoplasmic-facing; sequence MGELFRSEEM…DAYGIGTYRE (388 aa). 2 positions are modified to phosphothreonine: Thr-250 and Thr-360. Position 364 is a phosphotyrosine (Tyr-364). The chain crosses the membrane as a helical span at residues 389–407; the sequence is INPAPYTIITFPFLFAVMF. The Vacuolar portion of the chain corresponds to 408 to 409; sequence GD. A helical membrane pass occupies residues 410–426; that stretch reads LGHGILMTLFAVWMVLK. Topologically, residues 427–441 are cytoplasmic; the sequence is ESRILSQKNENEMFS. The helical transmembrane segment at 442 to 471 threads the bilayer; sequence TIFSGRYIILLMGVFSIYTGLIYNDCFSKS. Over 472–535 the chain is Vacuolar; it reads LNIFGSSWSV…ATNKLTFLNS (64 aa). A helical membrane pass occupies residues 536-555; sequence FKMKMSVILGIIHMLFGVSL. Over 556-573 the chain is Cytoplasmic; that stretch reads SLFNHTYFKKPLNIYFGF. A helical membrane pass occupies residues 574–594; that stretch reads IPEIIFMTSLFGYLVILIFYK. Residues 595-639 are Vacuolar-facing; it reads WTAYNAKTSEKAPSLLIHFINMFLFSYGDSGNSMLYSGQKGIQCF. The helical transmembrane segment at 640-659 threads the bilayer; the sequence is LVVVALLCVPWMLLFKPLVL. Over 660-725 the chain is Cytoplasmic; it reads RRQYLRRKHL…DTMVHQAIHT (66 aa). Residues 726–750 traverse the membrane as a helical segment; sequence IEYCLGCISNTASYLRLWALSLAHA. The Vacuolar portion of the chain corresponds to 751-771; it reads QLSEVLWTMVIHIGLKVKSLA. Residues 772 to 810 form a helical membrane-spanning segment; the sequence is GGLALFFIFAAFATLTVAILLIMEGLSAFLHALRLHWVE. The Cytoplasmic segment spans residues 811–838; sequence FQNKFYSGTGFKFLPFSFEHIREGKFDD.

Belongs to the V-ATPase 116 kDa subunit family. As to quaternary structure, V-ATPase is a heteromultimeric enzyme made up of two complexes: the ATP-hydrolytic V1 complex and the proton translocation V0 complex. The V1 complex consists of three catalytic AB heterodimers that form a heterohexamer, three peripheral stalks each consisting of EG heterodimers, one central rotor including subunits D and F, and the regulatory subunits C and H. The proton translocation complex V0 consists of the proton transport subunit a, a ring of proteolipid subunits c9c'', rotary subunit d, subunits e and f, and the accessory subunits ATP6AP1/Ac45 and ATP6AP2/PRR. Interacts with SPAAR. In terms of tissue distribution, expressed in brain (at protein level). As to expression, expressed heart, kidney, liver, spleen, and to a lesser extent in brain.

It localises to the cytoplasmic vesicle. It is found in the clathrin-coated vesicle membrane. Its subcellular location is the secretory vesicle. The protein resides in the synaptic vesicle membrane. The protein localises to the melanosome. In terms of biological role, subunit of the V0 complex of vacuolar(H+)-ATPase (V-ATPase), a multisubunit enzyme composed of a peripheral complex (V1) that hydrolyzes ATP and a membrane integral complex (V0) that translocates protons. V-ATPase is responsible for the acidification of various organelles, such as lysosomes, endosomes, the trans-Golgi network, and secretory granules, including synaptic vesicles. In certain cell types, can be exported to the plasma membrane, where it is involved in the acidification of the extracellular environment. Required for assembly and activity of the vacuolar ATPase. Through its action on compartment acidification, plays an essential role in neuronal development in terms of integrity and connectivity of neurons. The sequence is that of V-type proton ATPase 116 kDa subunit a 1 (ATP6V0A1) from Bos taurus (Bovine).